A 371-amino-acid chain; its full sequence is Glycosyltransferase 8 domain-containing protein 1 (371 aa).

At M1–K5 the chain is on the cytoplasmic side. The chain crosses the membrane as a helical; Signal-anchor for type II membrane protein span at residues V6–F26. Over L27 to K371 the chain is Lumenal. N257 carries N-linked (GlcNAc...) asparagine glycosylation.

Belongs to the glycosyltransferase 8 family.

The protein localises to the membrane. The polypeptide is Glycosyltransferase 8 domain-containing protein 1 (Glt8d1) (Rattus norvegicus (Rat)).